The following is a 325-amino-acid chain: ATP phosphoribosyltransferase (325 aa).

Belongs to the ATP phosphoribosyltransferase family. Long subfamily. The cofactor is Mg(2+).

The protein resides in the cytoplasm. The enzyme catalyses 1-(5-phospho-beta-D-ribosyl)-ATP + diphosphate = 5-phospho-alpha-D-ribose 1-diphosphate + ATP. It functions in the pathway amino-acid biosynthesis; L-histidine biosynthesis; L-histidine from 5-phospho-alpha-D-ribose 1-diphosphate: step 1/9. Its activity is regulated as follows. Feedback inhibited by histidine. Catalyzes the condensation of ATP and 5-phosphoribose 1-diphosphate to form N'-(5'-phosphoribosyl)-ATP (PR-ATP). Has a crucial role in the pathway because the rate of histidine biosynthesis seems to be controlled primarily by regulation of HisG enzymatic activity. This chain is ATP phosphoribosyltransferase, found in Nitrobacter hamburgensis (strain DSM 10229 / NCIMB 13809 / X14).